Consider the following 193-residue polypeptide: Potassium-transporting ATPase KdpC subunit (193 aa).

The chain crosses the membrane as a helical span at residues 11–31 (FTLVFMVLLGLVYPFVMTGIA).

It belongs to the KdpC family. The system is composed of three essential subunits: KdpA, KdpB and KdpC.

It localises to the cell membrane. In terms of biological role, part of the high-affinity ATP-driven potassium transport (or Kdp) system, which catalyzes the hydrolysis of ATP coupled with the electrogenic transport of potassium into the cytoplasm. This subunit acts as a catalytic chaperone that increases the ATP-binding affinity of the ATP-hydrolyzing subunit KdpB by the formation of a transient KdpB/KdpC/ATP ternary complex. In Caldanaerobacter subterraneus subsp. tengcongensis (strain DSM 15242 / JCM 11007 / NBRC 100824 / MB4) (Thermoanaerobacter tengcongensis), this protein is Potassium-transporting ATPase KdpC subunit.